A 107-amino-acid chain; its full sequence is FK506-binding protein 1 (107 aa).

In terms of domain architecture, PPIase FKBP-type spans 19–107 (GSNVTVHHAG…VFEVELITFK (89 aa)).

Belongs to the FKBP-type PPIase family.

It catalyses the reaction [protein]-peptidylproline (omega=180) = [protein]-peptidylproline (omega=0). With respect to regulation, inhibited by both FK506 and rapamycin. PPIases accelerate the folding of proteins by catalyzing the cis-trans isomerization of proline imidic peptide bonds in oligopeptides. This Dictyostelium discoideum (Social amoeba) protein is FK506-binding protein 1 (fkbp1).